Here is a 286-residue protein sequence, read N- to C-terminus: Putative thiosulfate sulfurtransferase (286 aa).

One can recognise a Rhodanese 1 domain in the interval 27 to 134 (DDPAYRLVEV…WVDNDYPTTD (108 aa)). Residues Lys162 and Lys166 each participate in a glycyl lysine isopeptide (Lys-Gly) (interchain with G-Cter in SAMP2) cross-link. Residues 164-283 (VDKGLPLVDV…WGNLVGAPVE (120 aa)) enclose the Rhodanese 2 domain. The Cysteine persulfide intermediate role is filled by Cys242. A substrate-binding site is contributed by Arg247.

The catalysed reaction is thiosulfate + hydrogen cyanide = thiocyanate + sulfite + 2 H(+). May be a sulfotransferase involved in the formation of thiosulfate. This is Putative thiosulfate sulfurtransferase (tssA) from Haloferax volcanii (strain ATCC 29605 / DSM 3757 / JCM 8879 / NBRC 14742 / NCIMB 2012 / VKM B-1768 / DS2) (Halobacterium volcanii).